Consider the following 397-residue polypeptide: Acetate kinase (397 aa).

Asparagine 8 contacts Mg(2+). An ATP-binding site is contributed by lysine 15. A substrate-binding site is contributed by arginine 89. Aspartate 146 (proton donor/acceptor) is an active-site residue. ATP contacts are provided by residues 206 to 210 (HLGNG), 281 to 283 (DLR), and 329 to 333 (GIGEN). Glutamate 382 contacts Mg(2+).

This sequence belongs to the acetokinase family. Homodimer. Mg(2+) is required as a cofactor. Requires Mn(2+) as cofactor.

The protein resides in the cytoplasm. The catalysed reaction is acetate + ATP = acetyl phosphate + ADP. Its pathway is metabolic intermediate biosynthesis; acetyl-CoA biosynthesis; acetyl-CoA from acetate: step 1/2. Catalyzes the formation of acetyl phosphate from acetate and ATP. Can also catalyze the reverse reaction. The sequence is that of Acetate kinase from Geobacillus sp. (strain WCH70).